A 111-amino-acid polypeptide reads, in one-letter code: Exocrine gland-secreted peptide 22 (111 aa).

The first 24 residues, methionine 1–glycine 24, serve as a signal peptide directing secretion.

This sequence belongs to the exocrine gland-secreted peptide family. Expressed in acinar cells of the lacrimal gland from where it is secreted into tears. Not detected in a range of other tissues tested including other exocrine glands, internal organs and sensory epithelia.

It is found in the secreted. In terms of biological role, pheromone produced by juveniles which activates a small number of vomeronasal organ sensory neurons and exhibits a powerful inhibitory effect on adult male mating behavior. In Mus musculus (Mouse), this protein is Exocrine gland-secreted peptide 22.